A 246-amino-acid chain; its full sequence is 5'-nucleotidase SurE (246 aa).

A divalent metal cation is bound by residues D8, D9, S39, and N91.

The protein belongs to the SurE nucleotidase family. A divalent metal cation serves as cofactor.

It localises to the cytoplasm. It carries out the reaction a ribonucleoside 5'-phosphate + H2O = a ribonucleoside + phosphate. In terms of biological role, nucleotidase that shows phosphatase activity on nucleoside 5'-monophosphates. The sequence is that of 5'-nucleotidase SurE from Mannheimia succiniciproducens (strain KCTC 0769BP / MBEL55E).